The sequence spans 362 residues: Glutamate--cysteine ligase (362 aa).

Belongs to the glutamate--cysteine ligase type 2 family. YbdK subfamily.

The catalysed reaction is L-cysteine + L-glutamate + ATP = gamma-L-glutamyl-L-cysteine + ADP + phosphate + H(+). In terms of biological role, catalyzes the synthesis of gamma-glutamylcysteine (gamma-GC), the main low-molecular-weight thiol compound instead of glutathione in halophilic archaea. This chain is Glutamate--cysteine ligase, found in Natronomonas pharaonis (strain ATCC 35678 / DSM 2160 / CIP 103997 / JCM 8858 / NBRC 14720 / NCIMB 2260 / Gabara) (Halobacterium pharaonis).